A 303-amino-acid chain; its full sequence is Putative ankyrin repeat protein R601 (303 aa).

ANK repeat units follow at residues 86-115 (DDNMFLKLAVNYNDEEVLKYLIDSGIDVTV), 117-146 (NNFAVKLQSGIIHNNRIIDLLINNGADITV), 147-176 (DNYFPYRYAASEQNKEALKILFSYNPNVDS), and 200-233 (NADVNINNGAILRENNQYYPVVKSLLAAGADVSY).

The sequence is that of Putative ankyrin repeat protein R601 from Acanthamoeba polyphaga (Amoeba).